A 772-amino-acid chain; its full sequence is MFDVKTVSLEWGGKTLTLETGRIARQADGAVLATYGETVVLCAVTAAKSVKEGQDFFPLTVHYQEKYSAAGRIPGGFFKRERGATEKETLVSRLIDRPVRPLFPEGFYNEINVIAQVLSYDGETEPDIVAMIAASAALTISGVPFMGPIAAARVGFIEGEYVLNPKQDVALADGRLDLVVAATDTAVMMVESEAKELSEDEMLGAVLFAHDEIKKVIGAIIQLAEKAAKDPWDIDLSDNTADIKKKLKDLVGKDVAAAYKLTDKSARSNALNEARAKAKAAFAEEGAQTQMVAMKTMKKVEADIVRGAILKDGQRIDGRTTTQVRPIEAIVGFLPRTHGSSLFTRGETQAICTTTLGTKDAEQMIDGLEGLRYENFMLHYNFPPYSVGEVGRFGAPGRREVGHGKLAWRALHPVLPTKEEFPYTIRILSDITESNGSSSMATVCGGCLSMMDAGVPVKRPVSGIAMGLILEGDKFAVLSDILGDEDHLGDMDFKVAGTSEGITTMQMDIKVAGITREIFEVALRQASEGRAHILGEMTKALGEARTELSAHAPRIETLQIDKSKIRDVIGTGGKVIREIVATTGAKVDIDDEGLIKISSSDLTQIEAAKNWILGIVEEAEVGKIYKGKVVNIVDFGAFVNFMGGKDGLVHVSEMKNERVEKPTDVVKEGQDVYVKVLEIDQRGKVRLSMRVVDQETGAELEDTRPPREPREPRGDRGDRGDRGDRRGPRGDRGPRREGGDRGPRREGGDRPRRDRDDGPAPDHMPAFLKSDD.

Mg(2+)-binding residues include Asp486 and Asp492. Positions 553-612 constitute a KH domain; sequence PRIETLQIDKSKIRDVIGTGGKVIREIVATTGAKVDIDDEGLIKISSSDLTQIEAAKNWI. Positions 622 to 690 constitute an S1 motif domain; sequence GKIYKGKVVN…QRGKVRLSMR (69 aa). The segment at 695 to 772 is disordered; sequence ETGAELEDTR…HMPAFLKSDD (78 aa). Residues 701–760 are compositionally biased toward basic and acidic residues; it reads EDTRPPREPREPRGDRGDRGDRGDRRGPRGDRGPRREGGDRGPRREGGDRPRRDRDDGPA.

The protein belongs to the polyribonucleotide nucleotidyltransferase family. Mg(2+) is required as a cofactor.

It localises to the cytoplasm. It catalyses the reaction RNA(n+1) + phosphate = RNA(n) + a ribonucleoside 5'-diphosphate. Involved in mRNA degradation. Catalyzes the phosphorolysis of single-stranded polyribonucleotides processively in the 3'- to 5'-direction. This Novosphingobium aromaticivorans (strain ATCC 700278 / DSM 12444 / CCUG 56034 / CIP 105152 / NBRC 16084 / F199) protein is Polyribonucleotide nucleotidyltransferase.